A 113-amino-acid chain; its full sequence is Ribonuclease P protein component (113 aa).

It belongs to the RnpA family. Consists of a catalytic RNA component (M1 or rnpB) and a protein subunit.

The catalysed reaction is Endonucleolytic cleavage of RNA, removing 5'-extranucleotides from tRNA precursor.. RNaseP catalyzes the removal of the 5'-leader sequence from pre-tRNA to produce the mature 5'-terminus. It can also cleave other RNA substrates such as 4.5S RNA. The protein component plays an auxiliary but essential role in vivo by binding to the 5'-leader sequence and broadening the substrate specificity of the ribozyme. This chain is Ribonuclease P protein component, found in Ureaplasma parvum serovar 3 (strain ATCC 27815 / 27 / NCTC 11736).